We begin with the raw amino-acid sequence, 486 residues long: Glutamate--tRNA ligase (486 aa).

The short motif at 11–21 (PSPTGLLHIGN) is the 'HIGH' region element. Positions 255-259 (KLSKR) match the 'KMSKS' region motif. K258 contributes to the ATP binding site.

The protein belongs to the class-I aminoacyl-tRNA synthetase family. Glutamate--tRNA ligase type 1 subfamily. In terms of assembly, monomer.

Its subcellular location is the cytoplasm. The catalysed reaction is tRNA(Glu) + L-glutamate + ATP = L-glutamyl-tRNA(Glu) + AMP + diphosphate. Functionally, catalyzes the attachment of glutamate to tRNA(Glu) in a two-step reaction: glutamate is first activated by ATP to form Glu-AMP and then transferred to the acceptor end of tRNA(Glu). The sequence is that of Glutamate--tRNA ligase from Streptococcus pneumoniae serotype 19F (strain G54).